The primary structure comprises 366 residues: Chorismate synthase (366 aa).

NADP(+)-binding residues include arginine 48 and arginine 54. Residues 125–127 (RSS), 238–239 (NA), glycine 278, 293–297 (KPTSS), and arginine 319 contribute to the FMN site.

This sequence belongs to the chorismate synthase family. As to quaternary structure, homotetramer. Requires FMNH2 as cofactor.

The enzyme catalyses 5-O-(1-carboxyvinyl)-3-phosphoshikimate = chorismate + phosphate. It participates in metabolic intermediate biosynthesis; chorismate biosynthesis; chorismate from D-erythrose 4-phosphate and phosphoenolpyruvate: step 7/7. Functionally, catalyzes the anti-1,4-elimination of the C-3 phosphate and the C-6 proR hydrogen from 5-enolpyruvylshikimate-3-phosphate (EPSP) to yield chorismate, which is the branch point compound that serves as the starting substrate for the three terminal pathways of aromatic amino acid biosynthesis. This reaction introduces a second double bond into the aromatic ring system. In Burkholderia orbicola (strain MC0-3), this protein is Chorismate synthase.